The primary structure comprises 426 residues: Dihydrofolate synthase/folylpolyglutamate synthase (426 aa).

58–61 (GKGS) lines the ATP pocket. Serine 82 contributes to the Mg(2+) binding site. Position 121 to 124 (121 to 124 (TRFE)) interacts with 7,8-dihydropteroate. A Mg(2+)-binding site is contributed by glutamate 145. Residue 152-154 (LDA) coordinates 7,8-dihydropteroate. Position 172 (histidine 172) interacts with Mg(2+). The ATP site is built by arginine 289 and aspartate 302.

The protein belongs to the folylpolyglutamate synthase family. As to quaternary structure, monomer. Requires Mg(2+) as cofactor.

The enzyme catalyses 7,8-dihydropteroate + L-glutamate + ATP = 7,8-dihydrofolate + ADP + phosphate + H(+). The catalysed reaction is (6S)-5,6,7,8-tetrahydrofolyl-(gamma-L-Glu)(n) + L-glutamate + ATP = (6S)-5,6,7,8-tetrahydrofolyl-(gamma-L-Glu)(n+1) + ADP + phosphate + H(+). It carries out the reaction 10-formyltetrahydrofolyl-(gamma-L-Glu)(n) + L-glutamate + ATP = 10-formyltetrahydrofolyl-(gamma-L-Glu)(n+1) + ADP + phosphate + H(+). It catalyses the reaction (6R)-5,10-methylenetetrahydrofolyl-(gamma-L-Glu)(n) + L-glutamate + ATP = (6R)-5,10-methylenetetrahydrofolyl-(gamma-L-Glu)(n+1) + ADP + phosphate + H(+). Its pathway is cofactor biosynthesis; tetrahydrofolate biosynthesis; 7,8-dihydrofolate from 2-amino-4-hydroxy-6-hydroxymethyl-7,8-dihydropteridine diphosphate and 4-aminobenzoate: step 2/2. It participates in cofactor biosynthesis; tetrahydrofolylpolyglutamate biosynthesis. Its function is as follows. Functions in two distinct reactions of the de novo folate biosynthetic pathway. Catalyzes the addition of a glutamate residue to dihydropteroate (7,8-dihydropteroate or H2Pte) to form dihydrofolate (7,8-dihydrofolate monoglutamate or H2Pte-Glu). Also catalyzes successive additions of L-glutamate to tetrahydrofolate or 10-formyltetrahydrofolate or 5,10-methylenetetrahydrofolate, leading to folylpolyglutamate derivatives. This Buchnera aphidicola subsp. Baizongia pistaciae (strain Bp) protein is Dihydrofolate synthase/folylpolyglutamate synthase (folC).